Here is a 1056-residue protein sequence, read N- to C-terminus: Isoleucine--tRNA ligase (1056 aa).

Over residues 1 to 13 (MCDQGEVSSQNSS) the composition is skewed to polar residues. Positions 1–26 (MCDQGEVSSQNSSDYKEQRPTPRPNL) are disordered. The short motif at 63 to 73 (PFANGLPHFGH) is the 'HIGH' region element. The 'KMSKS' region signature appears at 632–636 (KASKS). ATP is bound at residue K635.

This sequence belongs to the class-I aminoacyl-tRNA synthetase family. IleS type 2 subfamily. As to quaternary structure, monomer. It depends on Zn(2+) as a cofactor.

The protein localises to the cytoplasm. The catalysed reaction is tRNA(Ile) + L-isoleucine + ATP = L-isoleucyl-tRNA(Ile) + AMP + diphosphate. In terms of biological role, catalyzes the attachment of isoleucine to tRNA(Ile). As IleRS can inadvertently accommodate and process structurally similar amino acids such as valine, to avoid such errors it has two additional distinct tRNA(Ile)-dependent editing activities. One activity is designated as 'pretransfer' editing and involves the hydrolysis of activated Val-AMP. The other activity is designated 'posttransfer' editing and involves deacylation of mischarged Val-tRNA(Ile). This is Isoleucine--tRNA ligase from Tropheryma whipplei (strain TW08/27) (Whipple's bacillus).